Reading from the N-terminus, the 219-residue chain is Lipoprotein-releasing system ATP-binding protein LolD (219 aa).

An ABC transporter domain is found at 3-219; the sequence is IEARNIRKSF…HMRDGLLFSE (217 aa). Residue 35–42 participates in ATP binding; the sequence is GTSGAGKT.

This sequence belongs to the ABC transporter superfamily. Lipoprotein translocase (TC 3.A.1.125) family. In terms of assembly, the complex is composed of two ATP-binding proteins (LolD) and two transmembrane proteins (LolC and LolE).

The protein localises to the cell inner membrane. Functionally, part of the ABC transporter complex LolCDE involved in the translocation of mature outer membrane-directed lipoproteins, from the inner membrane to the periplasmic chaperone, LolA. Responsible for the formation of the LolA-lipoprotein complex in an ATP-dependent manner. This is Lipoprotein-releasing system ATP-binding protein LolD from Porphyromonas gingivalis (strain ATCC BAA-308 / W83).